The chain runs to 283 residues: Protease HtpX (283 aa).

The next 2 membrane-spanning stretches (helical) occupy residues 4–24 (ILLFLATNMAVMLVLGIILSV) and 33–53 (GGILIMALLFGFAGSLISLFL). His-139 serves as a coordination point for Zn(2+). Residue Glu-140 is part of the active site. His-143 lines the Zn(2+) pocket. The next 2 helical transmembrane spans lie at 147–167 (GDMVTMALLQGVLNTFVIFLS) and 190–210 (IYFLVSMVLEMLFGVLASIIA). Residue Glu-218 participates in Zn(2+) binding.

This sequence belongs to the peptidase M48B family. The cofactor is Zn(2+).

Its subcellular location is the cell inner membrane. The protein is Protease HtpX of Haemophilus influenzae (strain PittGG).